The chain runs to 1588 residues: Pentafunctional AROM polypeptide (1588 aa).

Positions 1–392 (MVQLAKVPIL…YGDSAQFVSD (392 aa)) are 3-dehydroquinate synthase. NAD(+)-binding positions include 43 to 45 (DTN), 78 to 81 (ETSK), 109 to 111 (GGV), and Asp114. Arg125 serves as a coordination point for 7-phospho-2-dehydro-3-deoxy-D-arabino-heptonate. 134–135 (TS) contacts NAD(+). The 7-phospho-2-dehydro-3-deoxy-D-arabino-heptonate site is built by Asp141 and Lys147. Lys156 provides a ligand contact to NAD(+). Asn157 contributes to the 7-phospho-2-dehydro-3-deoxy-D-arabino-heptonate binding site. NAD(+)-binding positions include 174 to 177 (WLET) and Asn185. Glu189 contacts Zn(2+). 7-phospho-2-dehydro-3-deoxy-D-arabino-heptonate contacts are provided by residues 189–192 (EVIK) and Lys258. The active-site Proton acceptor; for 3-dehydroquinate synthase activity is Glu268. Residues 272–276 (RNLLN) and His279 each bind 7-phospho-2-dehydro-3-deoxy-D-arabino-heptonate. Residue His279 participates in Zn(2+) binding. The active-site Proton acceptor; for 3-dehydroquinate synthase activity is the His283. 2 residues coordinate 7-phospho-2-dehydro-3-deoxy-D-arabino-heptonate: His295 and Lys364. Residue His295 coordinates Zn(2+). An EPSP synthase region spans residues 405–871 (VYPFKDIPAD…WDVLHSELGA (467 aa)). Cys853 acts as the For EPSP synthase activity in catalysis. The shikimate kinase stretch occupies residues 890–1080 (SVVIIGMRAA…IPSGRSAFVC (191 aa)). 895–902 (GMRAAGKT) lines the ATP pocket. Positions 1081–1293 (LTFDDLTEQT…AAPGQLTVAQ (213 aa)) are 3-dehydroquinase. Catalysis depends on His1198, which acts as the Proton acceptor; for 3-dehydroquinate dehydratase activity. Lys1227 serves as the catalytic Schiff-base intermediate with substrate; for 3-dehydroquinate dehydratase activity. Positions 1306–1588 (PKELFVVGKP…KAIFDAVTKE (283 aa)) are shikimate dehydrogenase.

It in the N-terminal section; belongs to the sugar phosphate cyclases superfamily. Dehydroquinate synthase family. In the 2nd section; belongs to the EPSP synthase family. The protein in the 3rd section; belongs to the shikimate kinase family. This sequence in the 4th section; belongs to the type-I 3-dehydroquinase family. It in the C-terminal section; belongs to the shikimate dehydrogenase family. In terms of assembly, homodimer. Requires Zn(2+) as cofactor.

Its subcellular location is the cytoplasm. It carries out the reaction 7-phospho-2-dehydro-3-deoxy-D-arabino-heptonate = 3-dehydroquinate + phosphate. It catalyses the reaction 3-dehydroquinate = 3-dehydroshikimate + H2O. The enzyme catalyses shikimate + NADP(+) = 3-dehydroshikimate + NADPH + H(+). The catalysed reaction is shikimate + ATP = 3-phosphoshikimate + ADP + H(+). It carries out the reaction 3-phosphoshikimate + phosphoenolpyruvate = 5-O-(1-carboxyvinyl)-3-phosphoshikimate + phosphate. The protein operates within metabolic intermediate biosynthesis; chorismate biosynthesis; chorismate from D-erythrose 4-phosphate and phosphoenolpyruvate: step 2/7. Its pathway is metabolic intermediate biosynthesis; chorismate biosynthesis; chorismate from D-erythrose 4-phosphate and phosphoenolpyruvate: step 3/7. It functions in the pathway metabolic intermediate biosynthesis; chorismate biosynthesis; chorismate from D-erythrose 4-phosphate and phosphoenolpyruvate: step 4/7. It participates in metabolic intermediate biosynthesis; chorismate biosynthesis; chorismate from D-erythrose 4-phosphate and phosphoenolpyruvate: step 5/7. The protein operates within metabolic intermediate biosynthesis; chorismate biosynthesis; chorismate from D-erythrose 4-phosphate and phosphoenolpyruvate: step 6/7. Functionally, the AROM polypeptide catalyzes 5 consecutive enzymatic reactions in prechorismate polyaromatic amino acid biosynthesis. The chain is Pentafunctional AROM polypeptide from Saccharomyces cerevisiae (strain YJM789) (Baker's yeast).